The sequence spans 401 residues: Nodal homolog 3-A (401 aa).

Positions 1–18 (MAFLSLFLCLVFSSPLMA) are cleaved as a signal peptide. Positions 19 to 274 (MPPALQGRKA…KVNGFRRLRR (256 aa)) are excised as a propeptide. Residues asparagine 168, asparagine 337, and asparagine 344 are each glycosylated (N-linked (GlcNAc...) asparagine). Disulfide bonds link cysteine 299–cysteine 365 and cysteine 328–cysteine 396.

This sequence belongs to the TGF-beta family. In terms of assembly, monomer. The propeptide region interacts with bmp4 in a non-covalent manner. In terms of tissue distribution, expressed in the dorsal marginal region of late blastula, becoming restricted to the Spemann organizer at the early gastrula stage.

It is found in the secreted. Functionally, exhibits mesoderm-dorsalizing activity and neural-inducing activity, but lacks mesoderm-inducing activity. Regulates the expression of specific mesodermal and neural genes. Induces convergent extension movements at the embryonic midline by activating the fgf signaling pathway to induce t/bra expression in the organizer region. Acts with wnt11 to induce Spemann organizer cells and induce axis formation. The unprocessed protein antagonizes bmp-signaling. The protein is Nodal homolog 3-A of Xenopus tropicalis (Western clawed frog).